Reading from the N-terminus, the 331-residue chain is uncharacterized protein (331 aa).

WD repeat units lie at residues 53-92, 97-139, 144-184, and 300-331; these read KAHT…KSAV, QQST…KLIR, AHND…DSTD, and ASEE…AFRV.

Its subcellular location is the cytoplasm. The protein localises to the nucleus. This is an uncharacterized protein from Schizosaccharomyces pombe (strain 972 / ATCC 24843) (Fission yeast).